A 413-amino-acid chain; its full sequence is tRNA (guanine-N(7)-)-methyltransferase non-catalytic subunit wdr4 (413 aa).

WD repeat units lie at residues 101–140, 144–183, 187–227, and 286–328; these read WVVR…KAGE, GHLS…NIQA, GHTE…RLHS, and TLTL…WRLC. The interval 386 to 413 is disordered; the sequence is KKRAAAANGSKPNKKSKTESGAVPQSTS.

Belongs to the WD repeat TRM82 family. Non-catalytic component of the METTL1-WDR4 complex, composed of mettl1 and wdr4.

The protein localises to the nucleus. Its pathway is tRNA modification; N(7)-methylguanine-tRNA biosynthesis. Its function is as follows. Non-catalytic component of the METTL1-WDR4 methyltransferase complex required for the formation of N(7)-methylguanine in a subset of RNA species, such as tRNAs, mRNAs and microRNAs (miRNAs). In the METTL1-WDR4 methyltransferase complex, wdr4 acts as a scaffold for tRNA-binding. Required for the formation of N(7)-methylguanine at position 46 (m7G46) in a large subset of tRNAs that contain the 5'-RAGGU-3' motif within the variable loop. M7G46 interacts with C13-G22 in the D-loop to stabilize tRNA tertiary structure and protect tRNAs from decay. Also required for the formation of N(7)-methylguanine at internal sites in a subset of mRNAs. Also required for methylation of a specific subset of miRNAs. The protein is tRNA (guanine-N(7)-)-methyltransferase non-catalytic subunit wdr4 (wdr4) of Danio rerio (Zebrafish).